The chain runs to 145 residues: 3-hydroxyacyl-[acyl-carrier-protein] dehydratase FabZ (145 aa).

The active site involves H49.

Belongs to the thioester dehydratase family. FabZ subfamily.

The protein resides in the cytoplasm. It carries out the reaction a (3R)-hydroxyacyl-[ACP] = a (2E)-enoyl-[ACP] + H2O. Involved in unsaturated fatty acids biosynthesis. Catalyzes the dehydration of short chain beta-hydroxyacyl-ACPs and long chain saturated and unsaturated beta-hydroxyacyl-ACPs. The chain is 3-hydroxyacyl-[acyl-carrier-protein] dehydratase FabZ from Rickettsia bellii (strain RML369-C).